The following is a 241-amino-acid chain: Small ribosomal subunit protein uS2 (241 aa).

Belongs to the universal ribosomal protein uS2 family.

The chain is Small ribosomal subunit protein uS2 from Citrobacter koseri (strain ATCC BAA-895 / CDC 4225-83 / SGSC4696).